A 283-amino-acid chain; its full sequence is Pantothenate synthetase (283 aa).

Residue 30-37 (MGYLHEGH) participates in ATP binding. The active-site Proton donor is the H37. Q61 lines the (R)-pantoate pocket. Residue Q61 coordinates beta-alanine. An ATP-binding site is contributed by 147–150 (GQKD). Q153 provides a ligand contact to (R)-pantoate. ATP contacts are provided by residues V176 and 184–187 (MSSR).

The protein belongs to the pantothenate synthetase family. In terms of assembly, homodimer.

It is found in the cytoplasm. The enzyme catalyses (R)-pantoate + beta-alanine + ATP = (R)-pantothenate + AMP + diphosphate + H(+). Its pathway is cofactor biosynthesis; (R)-pantothenate biosynthesis; (R)-pantothenate from (R)-pantoate and beta-alanine: step 1/1. In terms of biological role, catalyzes the condensation of pantoate with beta-alanine in an ATP-dependent reaction via a pantoyl-adenylate intermediate. The polypeptide is Pantothenate synthetase (Thermoanaerobacter sp. (strain X514)).